Here is a 239-residue protein sequence, read N- to C-terminus: Ribosomal RNA small subunit methyltransferase G (239 aa).

Residues Gly79, Phe84, 130–131 (AE), and Arg149 each bind S-adenosyl-L-methionine. Residues 218–227 (KHKKTPKKYP) are compositionally biased toward basic residues. The tract at residues 218 to 239 (KHKKTPKKYPRQAGTPNKKPIA) is disordered.

This sequence belongs to the methyltransferase superfamily. RNA methyltransferase RsmG family.

The protein localises to the cytoplasm. Specifically methylates the N7 position of a guanine in 16S rRNA. The protein is Ribosomal RNA small subunit methyltransferase G of Leuconostoc citreum (strain KM20).